Reading from the N-terminus, the 319-residue chain is NADH-quinone oxidoreductase subunit H 1 (319 aa).

9 consecutive transmembrane segments (helical) span residues 5-25 (ILTAIISTTLIMALLVAAGVF), 78-98 (LAPAVAATPVLAGFGVVAFGE), 109-129 (VMFLLGMMGLTAYAVVLGALA), 147-167 (LAYEAFLGLSMLGVVMIAGSL), 179-199 (VWFIVLQPIGAALFTLGGIAA), 214-234 (LVGGYITEYTGMSFGLFFLGE), 238-258 (ILLVSAFAVTLFFGGWLGPWL), 262-282 (IWFGLKTGVIAAMFVWIRAAL), and 294-314 (AWKVALPLALANVLITGFIVV).

The protein belongs to the complex I subunit 1 family. As to quaternary structure, NDH-1 is composed of 14 different subunits. Subunits NuoA, H, J, K, L, M, N constitute the membrane sector of the complex.

Its subcellular location is the cell inner membrane. It catalyses the reaction a quinone + NADH + 5 H(+)(in) = a quinol + NAD(+) + 4 H(+)(out). Functionally, NDH-1 shuttles electrons from NADH, via FMN and iron-sulfur (Fe-S) centers, to quinones in the respiratory chain. The immediate electron acceptor for the enzyme in this species is believed to be ubiquinone. Couples the redox reaction to proton translocation (for every two electrons transferred, four hydrogen ions are translocated across the cytoplasmic membrane), and thus conserves the redox energy in a proton gradient. This subunit may bind ubiquinone. This Rhodopseudomonas palustris (strain BisA53) protein is NADH-quinone oxidoreductase subunit H 1.